Here is a 193-residue protein sequence, read N- to C-terminus: Flagellar transcriptional regulator FlhC (193 aa).

Positions 137, 140, 158, and 161 each coordinate Zn(2+).

It belongs to the FlhC family. In terms of assembly, heterohexamer composed of two FlhC and four FlhD subunits. Each FlhC binds a FlhD dimer, forming a heterotrimer, and a hexamer assembles by dimerization of two heterotrimers. Requires Zn(2+) as cofactor.

The protein localises to the cytoplasm. Functions in complex with FlhD as a master transcriptional regulator that regulates transcription of several flagellar and non-flagellar operons by binding to their promoter region. Activates expression of class 2 flagellar genes, including fliA, which is a flagellum-specific sigma factor that turns on the class 3 genes. Also regulates genes whose products function in a variety of physiological pathways. The chain is Flagellar transcriptional regulator FlhC from Pectobacterium carotovorum (Erwinia carotovora).